A 519-amino-acid chain; its full sequence is Protein tweety homolog 1 (519 aa).

At 1 to 42 (MTFASFLINFYSVIPRLNFKFHWTNDVFNLEWSSEYFQALAL) the chain is on the extracellular side. A helical transmembrane segment spans residues 43-63 (VACLGAAVSLLLLVTIIIVWI). The Cytoplasmic portion of the chain corresponds to 64–82 (CQACHKNETTGKTRRRVRR). Residues 83–103 (LSTVLFIISVLCFFMLGVCLF) traverse the membrane as a helical segment. Residues 104-217 (ANEHVNRGMS…VLSLYESERW (114 aa)) are Extracellular-facing. N-linked (GlcNAc...) asparagine glycans are attached at residues Asn-142, Asn-163, and Asn-176. A helical transmembrane segment spans residues 218–238 (AFLVILLSITMVVLFTGVVAF). At 239-245 (CKQSKKG) the chain is on the cytoplasmic side. Residues 246 to 266 (AVVFSAIGFFIFVVVWLLISI) form a helical membrane-spanning segment. Topologically, residues 267 to 395 (SLPLTIALAD…GTCNQSVAGM (129 aa)) are extracellular. Asn-328, Asn-341, Asn-348, and Asn-389 each carry an N-linked (GlcNAc...) asparagine glycan. The helical transmembrane segment at 396-416 (SIYMLSILLLGVFLFILLIVV) threads the bilayer. At 417–519 (SKTWNLFSRL…YNNYEDRYNM (103 aa)) the chain is on the cytoplasmic side. The disordered stretch occupies residues 459–485 (YNPRTRDRTEPSTNTTSGTADEPNAPL).

Belongs to the tweety family.

The protein resides in the cell membrane. Its function is as follows. Probable chloride channel. The sequence is that of Protein tweety homolog 1 (ttyh-1) from Caenorhabditis elegans.